The chain runs to 224 residues: Proline/serine-rich protein C17A5.10 (224 aa).

The segment covering 1–10 (MTDDSVPPPS) has biased composition (pro residues). Residues 1-110 (MTDDSVPPPS…SNYNTAKPPY (110 aa)) are disordered. The segment covering 31 to 52 (TSTSAGHPSSSSSTLPNYAASS) has biased composition (low complexity). Composition is skewed to polar residues over residues 53–68 (LNSR…NAYS), 77–94 (PTSQ…STMY), and 101–110 (SNYNTAKPPY).

The protein belongs to the HUA1 family.

The protein resides in the cytoplasm. Its function is as follows. May be involved in assembly and disassembly of the actin cytoskeleton. This chain is Proline/serine-rich protein C17A5.10, found in Schizosaccharomyces pombe (strain 972 / ATCC 24843) (Fission yeast).